A 307-amino-acid chain; its full sequence is Acetaldehyde dehydrogenase (307 aa).

An NAD(+)-binding site is contributed by 12–15; it reads SGNI. C130 serves as the catalytic Acyl-thioester intermediate. NAD(+) is bound by residues 161–169 and N272; that span reads SVGPGTRQN.

This sequence belongs to the acetaldehyde dehydrogenase family.

It catalyses the reaction acetaldehyde + NAD(+) + CoA = acetyl-CoA + NADH + H(+). This Shewanella halifaxensis (strain HAW-EB4) protein is Acetaldehyde dehydrogenase.